We begin with the raw amino-acid sequence, 491 residues long: Glutamate--tRNA ligase (491 aa).

The 'HIGH' region motif lies at 12-22 (PSPTGTPHVGL). A disordered region spans residues 111-134 (STPEEVEERHKAAGRDPKLGYDNF). Over residues 117–134 (EERHKAAGRDPKLGYDNF) the composition is skewed to basic and acidic residues. Residues 256–260 (KLSKR) carry the 'KMSKS' region motif. Lysine 259 provides a ligand contact to ATP.

It belongs to the class-I aminoacyl-tRNA synthetase family. Glutamate--tRNA ligase type 1 subfamily. Monomer.

Its subcellular location is the cytoplasm. It carries out the reaction tRNA(Glu) + L-glutamate + ATP = L-glutamyl-tRNA(Glu) + AMP + diphosphate. Catalyzes the attachment of glutamate to tRNA(Glu) in a two-step reaction: glutamate is first activated by ATP to form Glu-AMP and then transferred to the acceptor end of tRNA(Glu). The chain is Glutamate--tRNA ligase from Rhodococcus jostii (strain RHA1).